Reading from the N-terminus, the 252-residue chain is uncharacterized protein (252 aa).

Belongs to the methyltransferase superfamily.

This is an uncharacterized protein from Mycobacterium sp. (strain JLS).